A 63-amino-acid chain; its full sequence is Large ribosomal subunit protein bL28 (63 aa).

This sequence belongs to the bacterial ribosomal protein bL28 family.

The polypeptide is Large ribosomal subunit protein bL28 (Coprothermobacter proteolyticus (strain ATCC 35245 / DSM 5265 / OCM 4 / BT)).